A 508-amino-acid polypeptide reads, in one-letter code: GMP synthase [glutamine-hydrolyzing] (508 aa).

Positions 1 to 189 (MILVLDFGSQ…ALLVCGCEKT (189 aa)) constitute a Glutamine amidotransferase type-1 domain. Cys-78 serves as the catalytic Nucleophile. Catalysis depends on residues His-163 and Glu-165. Positions 190 to 383 (WGMQHFAQRE…LGVSQDFLMH (194 aa)) constitute a GMPS ATP-PPase domain. 217–223 (SGGVDST) lines the ATP pocket.

As to quaternary structure, homodimer.

The catalysed reaction is XMP + L-glutamine + ATP + H2O = GMP + L-glutamate + AMP + diphosphate + 2 H(+). Its pathway is purine metabolism; GMP biosynthesis; GMP from XMP (L-Gln route): step 1/1. Catalyzes the synthesis of GMP from XMP. This chain is GMP synthase [glutamine-hydrolyzing], found in Helicobacter pylori (strain G27).